Consider the following 497-residue polypeptide: UPF0371 protein cu0538 (497 aa).

Belongs to the UPF0371 family.

The polypeptide is UPF0371 protein cu0538 (Corynebacterium urealyticum (strain ATCC 43042 / DSM 7109)).